A 362-amino-acid chain; its full sequence is Peptide chain release factor 1 (362 aa).

Residue Gln237 is modified to N5-methylglutamine. The disordered stretch occupies residues 279 to 305; the sequence is RLQQAEDEKRRSEEESSRRNLVASGDR. Over residues 282 to 296 the composition is skewed to basic and acidic residues; it reads QAEDEKRRSEEESSR.

Belongs to the prokaryotic/mitochondrial release factor family. Methylated by PrmC. Methylation increases the termination efficiency of RF1.

Its subcellular location is the cytoplasm. Functionally, peptide chain release factor 1 directs the termination of translation in response to the peptide chain termination codons UAG and UAA. In Colwellia psychrerythraea (strain 34H / ATCC BAA-681) (Vibrio psychroerythus), this protein is Peptide chain release factor 1.